The primary structure comprises 555 residues: Urocanate hydratase (555 aa).

Residues 51 to 52, glutamine 129, 175 to 177, glutamate 195, 262 to 266, 272 to 273, and tyrosine 321 contribute to the NAD(+) site; these read GG, GMG, QTSAH, and YL. Cysteine 409 is an active-site residue. Glycine 491 contacts NAD(+).

The protein belongs to the urocanase family. It depends on NAD(+) as a cofactor.

The protein localises to the cytoplasm. The catalysed reaction is 4-imidazolone-5-propanoate = trans-urocanate + H2O. It functions in the pathway amino-acid degradation; L-histidine degradation into L-glutamate; N-formimidoyl-L-glutamate from L-histidine: step 2/3. In terms of biological role, catalyzes the conversion of urocanate to 4-imidazolone-5-propionate. The chain is Urocanate hydratase from Xanthomonas campestris pv. campestris (strain ATCC 33913 / DSM 3586 / NCPPB 528 / LMG 568 / P 25).